A 125-amino-acid chain; its full sequence is Protein ApaG (125 aa).

One can recognise an ApaG domain in the interval 1-125; sequence MINSPRVCIQ…FRLAVPTLIH (125 aa).

This chain is Protein ApaG, found in Escherichia coli (strain SE11).